A 445-amino-acid chain; its full sequence is UDP-N-acetylmuramoylalanine--D-glutamate ligase (445 aa).

126 to 132 (GTSGKTT) is an ATP binding site.

This sequence belongs to the MurCDEF family.

The protein resides in the cytoplasm. The catalysed reaction is UDP-N-acetyl-alpha-D-muramoyl-L-alanine + D-glutamate + ATP = UDP-N-acetyl-alpha-D-muramoyl-L-alanyl-D-glutamate + ADP + phosphate + H(+). The protein operates within cell wall biogenesis; peptidoglycan biosynthesis. Functionally, cell wall formation. Catalyzes the addition of glutamate to the nucleotide precursor UDP-N-acetylmuramoyl-L-alanine (UMA). This chain is UDP-N-acetylmuramoylalanine--D-glutamate ligase, found in Nitratidesulfovibrio vulgaris (strain DSM 19637 / Miyazaki F) (Desulfovibrio vulgaris).